We begin with the raw amino-acid sequence, 198 residues long: MICOS complex subunit Mic26 (198 aa).

The first 23 residues, 1–23 (MFKVIQRSVGPASLSLLTFRVYA), serve as a signal peptide directing secretion. N-linked (GlcNAc...) asparagine glycosylation is present at asparagine 63. Residues 108-128 (PGFFPRLGVIGFAGFVGLLFA) traverse the membrane as a helical segment.

Belongs to the apolipoprotein O/MICOS complex subunit Mic27 family. Component of the mitochondrial contact site and cristae organizing system (MICOS) complex, composed of at least MICOS10/MIC10, CHCHD3/MIC19, CHCHD6/MIC25, APOOL/MIC27, IMMT/MIC60, APOO/MIC23/MIC26 and MICOS13/MIC13. This complex was also known under the names MINOS or MitOS complex. The MICOS complex associates with mitochondrial outer membrane proteins SAMM50, MTX1 and MTX2 (together described as components of the mitochondrial outer membrane sorting assembly machinery (SAM) complex) and DNAJC11, mitochondrial inner membrane protein TMEM11 and with HSPA9. The MICOS and SAM complexes together with DNAJC11 are part of a large protein complex spanning both membranes termed the mitochondrial intermembrane space bridging (MIB) complex. Interacts with IMMT/MIC60. Interacts with MICOS10/MIC10 and APOOL/MIC27.

It localises to the mitochondrion inner membrane. Its subcellular location is the mitochondrion. It is found in the endoplasmic reticulum membrane. The protein resides in the golgi apparatus membrane. Component of the MICOS complex, a large protein complex of the mitochondrial inner membrane that plays crucial roles in the maintenance of crista junctions, inner membrane architecture, and formation of contact sites to the outer membrane. Plays a crucial role in crista junction formation and mitochondrial function. Can induce cardiac lipotoxicity by enhancing mitochondrial respiration and fatty acid metabolism in cardiac myoblasts. Promotes cholesterol efflux from macrophage cells. Detected in HDL, LDL and VLDL. Secreted by a microsomal triglyceride transfer protein (MTTP)-dependent mechanism, probably as a VLDL-associated protein that is subsequently transferred to HDL. In Mus musculus (Mouse), this protein is MICOS complex subunit Mic26 (Apoo).